The primary structure comprises 219 residues: Protein P25 (219 aa).

The Nuclear localization signal motif lies at 57–62 (KRIRFR). A transcription activation region spans residues 103–146 (DPTRLDSSVNELLVSNGLVTHYDRVHNVPIHTDGFEVVDFTTVF). The Nuclear export signal signature appears at 169–178 (VYMVCLVNTV).

This sequence belongs to the benyvirus P25 protein family. As to quaternary structure, homooligomer.

It localises to the host cytoplasm. The protein localises to the host nucleus. In terms of biological role, pathogenicity factor implicated in symptom exacerbation. Might function as transcription activator (Potential). The sequence is that of Protein P25 from Beet necrotic yellow vein virus (isolate Japan/S) (BNYVV).